A 169-amino-acid chain; its full sequence is Calcium-binding protein G (169 aa).

EF-hand domains are found at residues 9–44 (KIFQDIQNFIQDYDLNKDYSVTSSEIYQSFLKKMNG), 60–83 (VDMDNDGKFSYYEISKYCADQAKK), 92–127 (AALADVEALLLRLDKDKDKKLNKTEFVKFFKEQGYN), and 133–162 (DYVLKIIDLDKDGYVSASELQEWFKQKRLA). 10 residues coordinate Ca(2+): Asp105, Asp107, Asp109, Lys111, Glu116, Asp140, Asp142, Asp144, Tyr146, and Glu151.

In Dictyostelium discoideum (Social amoeba), this protein is Calcium-binding protein G (cbpG).